The following is an 85-amino-acid chain: Phosphocarrier protein HPr (85 aa).

Positions 1 to 85 (MFQQEVTITA…HLVKLMAELE (85 aa)) constitute an HPr domain. H15 serves as the catalytic Pros-phosphohistidine intermediate.

It localises to the cytoplasm. Its function is as follows. General (non sugar-specific) component of the phosphoenolpyruvate-dependent sugar phosphotransferase system (sugar PTS). This major carbohydrate active-transport system catalyzes the phosphorylation of incoming sugar substrates concomitantly with their translocation across the cell membrane. The phosphoryl group from phosphoenolpyruvate (PEP) is transferred to the phosphoryl carrier protein HPr by enzyme I. Phospho-HPr then transfers it to the PTS EIIA domain. The sequence is that of Phosphocarrier protein HPr (ptsH) from Klebsiella pneumoniae.